Here is a 311-residue protein sequence, read N- to C-terminus: Serine/threonine-protein phosphatase PP1-1 (311 aa).

Residues Asp-53, His-55, Asp-82, and Asn-114 each contribute to the Mn(2+) site. His-115 (proton donor) is an active-site residue. Residues His-164 and His-238 each coordinate Mn(2+).

It belongs to the PPP phosphatase family. PP-6 (PP-V) subfamily. As to quaternary structure, inactivated in a complex with phosphatase methylesterase PPE1 (PP2Ai). Interacts with phosphatase 2A activator RRD1, which can reactivate PP2Ai by dissociating the catalytic subunit from the complex. Forms a ternary complex with RRD1-TAP42. It depends on Mn(2+) as a cofactor.

It is found in the cytoplasm. The catalysed reaction is O-phospho-L-seryl-[protein] + H2O = L-seryl-[protein] + phosphate. It catalyses the reaction O-phospho-L-threonyl-[protein] + H2O = L-threonyl-[protein] + phosphate. In terms of biological role, involved in the dephosphorylation of the large subunit of RNA polymerase II. Is required in late G1 for normal G1 cyclin expression, bud initiation and expression of certain genes that are periodically expressed during late G1. Associates with the SAP proteins in a cell cycle-dependent manner. The sequence is that of Serine/threonine-protein phosphatase PP1-1 (SIT4) from Saccharomyces cerevisiae (strain ATCC 204508 / S288c) (Baker's yeast).